Here is a 555-residue protein sequence, read N- to C-terminus: 6-phosphofructo-2-kinase/fructose-2,6-bisphosphatase 3 (555 aa).

The tract at residues 1 to 245 is 6-phosphofructo-2-kinase; sequence MPLELTQSRV…VYYLMNIHVQ (245 aa). An ATP-binding site is contributed by 42–50; the sequence is GLPARGKTY. Residues R75 and R99 each contribute to the beta-D-fructose 6-phosphate site. D125 is a catalytic residue. Beta-D-fructose 6-phosphate-binding residues include T127 and R133. C155 is an active-site residue. Position 164-169 (164-169) interacts with ATP; that stretch reads NIMEVK. Positions 169, 190, and 194 each coordinate beta-D-fructose 6-phosphate. Residues 246–555 are fructose-2,6-bisphosphatase; sequence PRTIYLCRHG…CHIFSKFSPY (310 aa). Residue R253 coordinates beta-D-fructose 2,6-bisphosphate. The active-site Tele-phosphohistidine intermediate is H254. 2 residues coordinate beta-D-fructose 2,6-bisphosphate: N260 and G266. The active-site Proton donor/acceptor is E323. Beta-D-fructose 2,6-bisphosphate-binding residues include Y334, R348, K352, Y363, Q389, and R393. 345 to 348 lines the ATP pocket; the sequence is YALR. ATP-binding positions include 389–393 and Y425; that span reads QAVLR. The disordered stretch occupies residues 475–504; that stretch reads KQDAKKGPNPLMRRNSVTPLASPEPTKKPR. A Phosphoserine; by AMPK and PKA modification is found at S490. T492 is subject to Phosphothreonine. A Phosphoserine modification is found at S496.

This sequence in the C-terminal section; belongs to the phosphoglycerate mutase family. Homodimer. Forms a heterodimer with PFKFB2. Phosphorylation by AMPK stimulates activity.

It carries out the reaction beta-D-fructose 2,6-bisphosphate + H2O = beta-D-fructose 6-phosphate + phosphate. The enzyme catalyses beta-D-fructose 6-phosphate + ATP = beta-D-fructose 2,6-bisphosphate + ADP + H(+). In terms of biological role, catalyzes both the synthesis and degradation of fructose 2,6-bisphosphate. In Rattus norvegicus (Rat), this protein is 6-phosphofructo-2-kinase/fructose-2,6-bisphosphatase 3 (Pfkfb3).